Consider the following 480-residue polypeptide: Cysteine--tRNA ligase (480 aa).

C27 is a binding site for Zn(2+). A 'HIGH' region motif is present at residues 29–39 (PTVYNYAHIGN). Zn(2+) contacts are provided by C221, H246, and E250. The 'KMSKS' region signature appears at 278–282 (KMSKS). Residue K281 coordinates ATP.

It belongs to the class-I aminoacyl-tRNA synthetase family. In terms of assembly, monomer. The cofactor is Zn(2+).

Its subcellular location is the cytoplasm. It carries out the reaction tRNA(Cys) + L-cysteine + ATP = L-cysteinyl-tRNA(Cys) + AMP + diphosphate. The sequence is that of Cysteine--tRNA ligase from Borreliella burgdorferi (strain ZS7) (Borrelia burgdorferi).